A 326-amino-acid chain; its full sequence is Ribonuclease Z (326 aa).

Zn(2+)-binding residues include His62, His64, Asp66, His67, His140, Asp211, and His269. Asp66 acts as the Proton acceptor in catalysis.

Belongs to the RNase Z family. In terms of assembly, homodimer. The cofactor is Zn(2+).

It carries out the reaction Endonucleolytic cleavage of RNA, removing extra 3' nucleotides from tRNA precursor, generating 3' termini of tRNAs. A 3'-hydroxy group is left at the tRNA terminus and a 5'-phosphoryl group is left at the trailer molecule.. In terms of biological role, zinc phosphodiesterase, which displays some tRNA 3'-processing endonuclease activity. Probably involved in tRNA maturation, by removing a 3'-trailer from precursor tRNA. In Synechocystis sp. (strain ATCC 27184 / PCC 6803 / Kazusa), this protein is Ribonuclease Z.